Reading from the N-terminus, the 2343-residue chain is Pecanex-like protein 1 (2343 aa).

2 helical membrane passes run 33–53 (ALHL…YMAL) and 57–77 (MIIV…LKMV). Disordered stretches follow at residues 98 to 163 (FTDQ…GSSR), 271 to 290 (SHSY…SSSA), 306 to 691 (QQQR…TRAR), and 749 to 826 (TRSR…QGQQ). The span at 143 to 163 (SSRNSYAGLDPSNQIGSGSSR) shows a compositional bias: polar residues. Basic residues predominate over residues 272–282 (HSYRKEHRPRG). Over residues 372-390 (SLRSLSTRSSGSTESYCSG) the composition is skewed to low complexity. The span at 396–412 (NSTLSSYKSEQTSSTHI) shows a compositional bias: polar residues. 3 stretches are compositionally biased toward basic and acidic residues: residues 416 to 457 (LSEH…DKTA), 507 to 521 (RPPE…EQGE), and 530 to 546 (KVCK…DVRP). The span at 556–571 (TSAHKPGRRRTGKKRA) shows a compositional bias: basic residues. Low complexity-rich tracts occupy residues 624 to 637 (SDSS…SCQS), 769 to 780 (AATGAAQASEEA), and 809 to 826 (TLLI…QGQQ). Helical transmembrane passes span 978 to 998 (FWIL…LLAL), 1009 to 1029 (ILAV…LIQG), 1034 to 1054 (IWVF…LKSV), 1068 to 1088 (IIAY…WLLD), 1118 to 1138 (LVIV…LPQV), 1162 to 1182 (LLAA…LYGL), 1195 to 1215 (HIPV…YHLS), 1268 to 1288 (LVVC…TVFT), 1296 to 1316 (YVLY…LPQV), 1406 to 1426 (SFSS…FFKF), 1434 to 1454 (TMLL…ELLY), 1458 to 1478 (FVYT…HAFA), and 1493 to 1513 (AVVS…AIFI). The tract at residues 2050–2120 (EDSDTGGGTS…VQSSLVRQSP (71 aa)) is disordered. Composition is skewed to polar residues over residues 2060-2080 (CPAN…QGST) and 2094-2117 (PTTS…SLVR).

Belongs to the pecanex family. As to expression, specifically expressed in the germ line and not in the somatic cells of the testis, reaching its peak at the pachytene stage of the meiotic prophase. Detected in pachytene spermatocytes and round spermatids (at protein level).

The protein localises to the membrane. This Rattus norvegicus (Rat) protein is Pecanex-like protein 1.